A 556-amino-acid chain; its full sequence is Formate--tetrahydrofolate ligase (556 aa).

Residue 65–72 (TPAGEGKS) participates in ATP binding.

This sequence belongs to the formate--tetrahydrofolate ligase family.

It catalyses the reaction (6S)-5,6,7,8-tetrahydrofolate + formate + ATP = (6R)-10-formyltetrahydrofolate + ADP + phosphate. It participates in one-carbon metabolism; tetrahydrofolate interconversion. This Streptococcus uberis (strain ATCC BAA-854 / 0140J) protein is Formate--tetrahydrofolate ligase.